Here is an 86-residue protein sequence, read N- to C-terminus: Large ribosomal subunit protein bL27c (86 aa).

A disordered region spans residues 1 to 27; it reads MAHKKGSGSTRNGRDSNSKRLGVKKYG.

This sequence belongs to the bacterial ribosomal protein bL27 family.

It is found in the plastid. The protein resides in the chloroplast. In Porphyra purpurea (Red seaweed), this protein is Large ribosomal subunit protein bL27c (rpl27).